A 522-amino-acid polypeptide reads, in one-letter code: ARS-binding protein 1 (522 aa).

An HTH CENPB-type domain is found at 70–144 (DVKRNRPPKY…RKRHILHAIN (75 aa)). A Phosphothreonine modification is found at T460.

Interacts with mcm10.

The protein localises to the nucleus. In terms of biological role, binds, preferentially, to the Maundrell ARS consensus sequence within ARS3002. The chain is ARS-binding protein 1 (abp1) from Schizosaccharomyces pombe (strain 972 / ATCC 24843) (Fission yeast).